A 185-amino-acid polypeptide reads, in one-letter code: Putative lipoprotein LprB (185 aa).

A signal peptide spans 1-24; that stretch reads MRRKVRRLTLAVSALVALFPAVAG. A lipid anchor (N-palmitoyl cysteine) is attached at C25. C25 carries S-diacylglycerol cysteine lipidation. The tract at residues 26–50 is disordered; it reads SDSGDNKPGATIPSTPANAEGRHGP.

It localises to the cell membrane. This chain is Putative lipoprotein LprB (lprB), found in Mycobacterium tuberculosis (strain CDC 1551 / Oshkosh).